Here is a 379-residue protein sequence, read N- to C-terminus: Cytochrome b (379 aa).

4 helical membrane passes run 33–53, 77–98, 113–133, and 178–198; these read FGSLLGMCLMIQILTGLFLAM, WLIRYLHANGASMFFICLFIHV, WNIGIILFLTTMATAFVGYVL, and FFAFHFILPFIITAFALVHLL. Heme b contacts are provided by His83 and His97. His182 and His196 together coordinate heme b. Residue His201 participates in a ubiquinone binding. A run of 4 helical transmembrane segments spans residues 226 to 246, 288 to 308, 320 to 340, and 347 to 367; these read TKDLLGIFLLLLVLMILALFF, LGGVLALVLSILILAAFPLLN, ITQVIYWIFIXNLLVLTWIGG, and XTMIGQIASITYFAIIIILIP.

It belongs to the cytochrome b family. In terms of assembly, the cytochrome bc1 complex contains 11 subunits: 3 respiratory subunits (MT-CYB, CYC1 and UQCRFS1), 2 core proteins (UQCRC1 and UQCRC2) and 6 low-molecular weight proteins (UQCRH/QCR6, UQCRB/QCR7, UQCRQ/QCR8, UQCR10/QCR9, UQCR11/QCR10 and a cleavage product of UQCRFS1). This cytochrome bc1 complex then forms a dimer. It depends on heme b as a cofactor.

It is found in the mitochondrion inner membrane. Its function is as follows. Component of the ubiquinol-cytochrome c reductase complex (complex III or cytochrome b-c1 complex) that is part of the mitochondrial respiratory chain. The b-c1 complex mediates electron transfer from ubiquinol to cytochrome c. Contributes to the generation of a proton gradient across the mitochondrial membrane that is then used for ATP synthesis. The sequence is that of Cytochrome b (MT-CYB) from Akodon boliviensis (Bolivian grass mouse).